The sequence spans 816 residues: Leucine--tRNA ligase (816 aa).

Positions 40-51 (SYPSGSQLHAGH) match the 'HIGH' region motif. A 'KMSKS' region motif is present at residues 576–580 (KMSKS). Residue Lys-579 coordinates ATP.

It belongs to the class-I aminoacyl-tRNA synthetase family.

Its subcellular location is the cytoplasm. The catalysed reaction is tRNA(Leu) + L-leucine + ATP = L-leucyl-tRNA(Leu) + AMP + diphosphate. The chain is Leucine--tRNA ligase from Clostridium perfringens (strain 13 / Type A).